Consider the following 508-residue polypeptide: BICD family-like cargo adapter 2 (508 aa).

Over residues 1–22 (MSSPDGPSFPSGPLSGGASPSG) the composition is skewed to low complexity. 3 disordered regions span residues 1–27 (MSSP…EGFF), 132–152 (LGEQ…ALSE), and 300–351 (AHSL…TSLS). 2 coiled-coil regions span residues 64-300 (AAEL…SELA) and 353-458 (AEIL…DMQV). The segment covering 135 to 149 (QRSEQQDSGRERARA) has biased composition (basic and acidic residues). The disordered stretch occupies residues 470 to 491 (KELSASASSSTPRRAAPRFSLR). Low complexity predominate over residues 473–489 (SASASSSTPRRAAPRFS).

Belongs to the BICDR family. Interacts with RAB13.

This Homo sapiens (Human) protein is BICD family-like cargo adapter 2 (BICDL2).